A 297-amino-acid polypeptide reads, in one-letter code: Acetylglutamate kinase (297 aa).

Residues 70 to 71 (GG), Arg92, and Asn194 each bind substrate.

Belongs to the acetylglutamate kinase family. ArgB subfamily.

The protein localises to the cytoplasm. It carries out the reaction N-acetyl-L-glutamate + ATP = N-acetyl-L-glutamyl 5-phosphate + ADP. The protein operates within amino-acid biosynthesis; L-arginine biosynthesis; N(2)-acetyl-L-ornithine from L-glutamate: step 2/4. Functionally, catalyzes the ATP-dependent phosphorylation of N-acetyl-L-glutamate. The chain is Acetylglutamate kinase from Herminiimonas arsenicoxydans.